Here is a 307-residue protein sequence, read N- to C-terminus: Beta-lactamase (307 aa).

The segment at residues 1–34 (MRNRGFGRRELLVAMAMLVSVTGCARHASGARPA) is a signal peptide (tat-type signal). Residue Ser-84 is the Acyl-ester intermediate of the active site. Ser-142 is a substrate binding site. Residue Glu-182 is the Proton acceptor of the active site. Residue 251–253 (TGT) participates in substrate binding.

This sequence belongs to the class-A beta-lactamase family. In terms of assembly, monomer. Post-translationally, exported by the Tat system. The position of the signal peptide cleavage has not been experimentally proven.

It is found in the periplasm. The protein resides in the secreted. It carries out the reaction a beta-lactam + H2O = a substituted beta-amino acid. Its activity is regulated as follows. Is inhibited by clavulanate. Its function is as follows. Extended spectrum beta-lactamase (ESBL) that inactivates beta-lactam antibiotics by hydrolyzing the amide group of the beta-lactam ring. Displays high levels of penicillinase and cephalosporinase activity as well as measurable activity with carbapenems, including imipenem and meropenem. Plays a primary role in the intrinsic resistance of mycobacteria to beta-lactam antibiotics. In Mycobacterium bovis (strain ATCC BAA-935 / AF2122/97), this protein is Beta-lactamase (blaC).